Here is a 220-residue protein sequence, read N- to C-terminus: ATP phosphoribosyltransferase (220 aa).

It belongs to the ATP phosphoribosyltransferase family. Short subfamily. In terms of assembly, heteromultimer composed of HisG and HisZ subunits.

It is found in the cytoplasm. The catalysed reaction is 1-(5-phospho-beta-D-ribosyl)-ATP + diphosphate = 5-phospho-alpha-D-ribose 1-diphosphate + ATP. The protein operates within amino-acid biosynthesis; L-histidine biosynthesis; L-histidine from 5-phospho-alpha-D-ribose 1-diphosphate: step 1/9. Its function is as follows. Catalyzes the condensation of ATP and 5-phosphoribose 1-diphosphate to form N'-(5'-phosphoribosyl)-ATP (PR-ATP). Has a crucial role in the pathway because the rate of histidine biosynthesis seems to be controlled primarily by regulation of HisG enzymatic activity. The polypeptide is ATP phosphoribosyltransferase (Anaeromyxobacter sp. (strain Fw109-5)).